We begin with the raw amino-acid sequence, 555 residues long: MIWVAVVITMLLFILVAKPTGIYLEKAFQGSKKLDKVFGPFEKLIFKITGVKEYNQTWKQYALSLVLLNGFMIVVVYFIFRLQGVLPLNPAHIEGMEPTLAFNTAISFMADTNLQHYSGENGLSYLSQLIGITFLMFAAPATTLALVMAFIRGLAGKELGNFFVDFTRALTRVFLPIAFIAALVFVALGVPQTLDGAVTAQTIDGAKQSILRGPVASFISIKELGNNGGGFFGANSTHPFENPGQMSNILQMMLMMLLPTALPFTYGRMVGNKKQGRILFVSLFMVFLLGFITITTSELHGNPALNGMGIEHVQGSTEGKEVRFGTVFSSLYATVTTAAETGAVNTMHDTLTPIGGLVPLVNMMLNTVYGGVGAGFVNIIMYAIIAVFISGLMVGRTPEFLGKKIEGKEMKLIAVTILFHPLLILGFSALALSTSLGTDAISHSGFHGLTQVVYEYTSSAANNGSGFEGLADNTPFWNITTGLVMFLGRYFSLITMLAVAASLKEKTVVPETVGTFRTDNSLFGGIFIGTIVIVGALTFFPMLVLGPIAEFLTLK.

The next 10 membrane-spanning stretches (helical) occupy residues 2–22, 60–80, 130–150, 173–193, 246–266, 278–298, 374–394, 412–432, 483–503, and 525–545; these read IWVA…PTGI, QYAL…YFIF, IGIT…VMAF, VFLP…VPQT, MSNI…PFTY, ILFV…TTSE, AGFV…GLMV, LIAV…ALAL, LVMF…AASL, and GIFI…MLVL.

Belongs to the KdpA family. In terms of assembly, the system is composed of three essential subunits: KdpA, KdpB and KdpC.

The protein localises to the cell membrane. Functionally, part of the high-affinity ATP-driven potassium transport (or Kdp) system, which catalyzes the hydrolysis of ATP coupled with the electrogenic transport of potassium into the cytoplasm. This subunit binds the extracellular potassium ions and delivers the ions to the membrane domain of KdpB through an intramembrane tunnel. This Bacillus cereus (strain 03BB102) protein is Potassium-transporting ATPase potassium-binding subunit.